A 398-amino-acid polypeptide reads, in one-letter code: tRNA(Ile)-lysidine synthase (398 aa).

An ATP-binding site is contributed by 17–22 (SGGPDS).

This sequence belongs to the tRNA(Ile)-lysidine synthase family.

It localises to the cytoplasm. It catalyses the reaction cytidine(34) in tRNA(Ile2) + L-lysine + ATP = lysidine(34) in tRNA(Ile2) + AMP + diphosphate + H(+). Ligates lysine onto the cytidine present at position 34 of the AUA codon-specific tRNA(Ile) that contains the anticodon CAU, in an ATP-dependent manner. Cytidine is converted to lysidine, thus changing the amino acid specificity of the tRNA from methionine to isoleucine. In Mesoplasma florum (strain ATCC 33453 / NBRC 100688 / NCTC 11704 / L1) (Acholeplasma florum), this protein is tRNA(Ile)-lysidine synthase.